A 187-amino-acid polypeptide reads, in one-letter code: Adenine phosphoribosyltransferase (187 aa).

The protein belongs to the purine/pyrimidine phosphoribosyltransferase family. Homodimer.

It localises to the cytoplasm. It carries out the reaction AMP + diphosphate = 5-phospho-alpha-D-ribose 1-diphosphate + adenine. It functions in the pathway purine metabolism; AMP biosynthesis via salvage pathway; AMP from adenine: step 1/1. Its function is as follows. Catalyzes a salvage reaction resulting in the formation of AMP, that is energically less costly than de novo synthesis. The sequence is that of Adenine phosphoribosyltransferase from Burkholderia pseudomallei (strain 1106a).